The following is a 480-amino-acid chain: UDP-glucose 6-dehydrogenase 3 (480 aa).

Residues 8–13 (GAGYVG), Asp33, Arg38, 86–90 (VNTPT), 127–128 (ST), and Glu161 each bind NAD(+). Residues 157–161 (EFLAE), 216–223 (KLAANAFL), and 256–269 (RIGP…VGFG) each bind substrate. Cys272 (nucleophile) is an active-site residue. NAD(+) is bound at residue 272-275 (CFQK). 334–335 (FK) serves as a coordination point for substrate. NAD(+) is bound at residue Arg342. Arg447 is a substrate binding site.

Belongs to the UDP-glucose/GDP-mannose dehydrogenase family.

It catalyses the reaction UDP-alpha-D-glucose + 2 NAD(+) + H2O = UDP-alpha-D-glucuronate + 2 NADH + 3 H(+). Its pathway is nucleotide-sugar biosynthesis; UDP-alpha-D-glucuronate biosynthesis; UDP-alpha-D-glucuronate from UDP-alpha-D-glucose: step 1/1. Inhibited by UDP-xylose. In terms of biological role, involved in the biosynthesis of UDP-glucuronic acid (UDP-GlcA), providing nucleotide sugars for cell-wall polymers. Required for the formation of cell wall ingrowths on the outer cell walls of nematode-induced syncytia. This is UDP-glucose 6-dehydrogenase 3 (UGD3) from Arabidopsis thaliana (Mouse-ear cress).